A 294-amino-acid polypeptide reads, in one-letter code: Proteasome subunit beta (294 aa).

Residues 1 to 65 (MTADRPALRT…MESGDLAPHG (65 aa)) constitute a propeptide, removed in mature form; by autocatalysis. The active-site Nucleophile is the T66.

This sequence belongs to the peptidase T1B family. The 20S proteasome core is composed of 14 alpha and 14 beta subunits that assemble into four stacked heptameric rings, resulting in a barrel-shaped structure. The two inner rings, each composed of seven catalytic beta subunits, are sandwiched by two outer rings, each composed of seven alpha subunits. The catalytic chamber with the active sites is on the inside of the barrel. Has a gated structure, the ends of the cylinder being occluded by the N-termini of the alpha-subunits. Is capped by the proteasome-associated ATPase, ARC.

The protein resides in the cytoplasm. The enzyme catalyses Cleavage of peptide bonds with very broad specificity.. Its pathway is protein degradation; proteasomal Pup-dependent pathway. Its activity is regulated as follows. The formation of the proteasomal ATPase ARC-20S proteasome complex, likely via the docking of the C-termini of ARC into the intersubunit pockets in the alpha-rings, may trigger opening of the gate for substrate entry. Interconversion between the open-gate and close-gate conformations leads to a dynamic regulation of the 20S proteasome proteolysis activity. Its function is as follows. Component of the proteasome core, a large protease complex with broad specificity involved in protein degradation. The protein is Proteasome subunit beta of Rhodococcus jostii (strain RHA1).